A 925-amino-acid chain; its full sequence is Coronin-7 (925 aa).

4 WD repeats span residues 75–115 (CHSD…QALP), 124–163 (PEDL…PLTE), 166–205 (AHGD…RASQ), and 209–253 (AHEN…SALA). Residues 419 to 461 (VGDADASEGFSSPPSSLTSPSTPSSLGPSLSSTSGIGTSPSLR) form a disordered region. Positions 429–460 (SSPPSSLTSPSTPSSLGPSLSSTSGIGTSPSL) are enriched in low complexity. Serine 462 and serine 465 each carry phosphoserine. A Glycyl lysine isopeptide (Lys-Gly) (interchain with G-Cter in ubiquitin) cross-link involves residue lysine 472. WD repeat units lie at residues 542–582 (QNGA…LEEV), 592–632 (GHTE…DRLK), and 635–674 (GHQD…EPLQ). Residue lysine 680 forms a Glycyl lysine isopeptide (Lys-Gly) (interchain with G-Cter in ubiquitin) linkage. The WD 8 repeat unit spans residues 728–768 (DVAPSTLLPSYDPDTGLVLLTGKGDTRVFLYELLPESPFFL). The tract at residues 858 to 925 (QPPDMSPVSQ…FEGVDEDEWD (68 aa)) is disordered. The segment covering 866 to 882 (SQAPREAPARRAPSSAQ) has biased composition (low complexity). The span at 884–896 (LEEKSDQQKKEEL) shows a compositional bias: basic and acidic residues. Phosphoserine is present on serine 915.

Belongs to the WD repeat coronin family. In terms of assembly, interacts with clathrin adapter AP1 complex. This interaction takes place at Golgi membranes and not AP1-positive endosomal membranes. Interacts (when ubiquitinated at Lys-472) with EPS15. Post-translationally, the membrane-associated form is phosphorylated on tyrosine residues. Ubiquitinated via 'Lys-33'-linked ubiquitin chains by the BCR(KLHL20) E3 ubiquitin ligase complex: 'Lys-33'-linked ubiquitination promotes interaction with EPS15 and facilitates actin polymerization at the trans-Golgi network, thereby facilitating post-Golgi trafficking. Deubiquitinated by ZRANB1/TRABID. In terms of tissue distribution, widely expressed. Expressed in the spleen, peripheral leukocytes, testes, brain, thymus and small intestine.

Its subcellular location is the golgi apparatus membrane. It is found in the golgi apparatus. It localises to the trans-Golgi network. The protein resides in the cytoplasmic vesicle. The protein localises to the cytoplasm. Its subcellular location is the cytosol. F-actin regulator involved in anterograde Golgi to endosome transport: upon ubiquitination via 'Lys-33'-linked ubiquitin chains by the BCR(KLHL20) E3 ubiquitin ligase complex, interacts with EPS15 and localizes to the trans-Golgi network, where it promotes actin polymerization, thereby facilitating post-Golgi trafficking. May play a role in the maintenance of the Golgi apparatus morphology. In Homo sapiens (Human), this protein is Coronin-7 (CORO7).